A 369-amino-acid chain; its full sequence is MSLLDVLANQHAAMMPEEYKHRSVDEMEQRVVDIKRAFGSKLFIPGHHYQKDEVIQFADATGDSLQLAQIAADNKEAEYIVFCGVHFMAETADMLSKKNQKVLLPDMRAGCSMADMANMKQTDRAWEQLTDLFGETILPLTYVNSTADIKAFVGKHGGATVTSSNAKKMLEWALTQKERILFLPDQHLGRNTAFDLGISLEEMAVWDQIEERLITDQPLSRIKMILWKGHCSVHEKFTVRNIEETRKRDRDIQILVHPECTHEVVTASDLAGSTKFIIDTIKEAPAGSKWAIGTEMNLVKRIINQHPDKQIESLNPDMCPCLTMNRIDLPHLLWSLESIEKGDPVGFIQVNEDTTKDALLALNKMLIIK.

2 residues coordinate iminosuccinate: His-47 and Ser-64. Cys-111 contacts [4Fe-4S] cluster. Residues 142–144 (YVN) and Ser-163 contribute to the iminosuccinate site. Residue Cys-231 coordinates [4Fe-4S] cluster. Residues 257-259 (HPE) and Thr-274 contribute to the iminosuccinate site. Cys-321 lines the [4Fe-4S] cluster pocket.

This sequence belongs to the quinolinate synthase family. Type 3 subfamily. [4Fe-4S] cluster serves as cofactor.

It is found in the cytoplasm. It carries out the reaction iminosuccinate + dihydroxyacetone phosphate = quinolinate + phosphate + 2 H2O + H(+). The protein operates within cofactor biosynthesis; NAD(+) biosynthesis; quinolinate from iminoaspartate: step 1/1. In terms of biological role, catalyzes the condensation of iminoaspartate with dihydroxyacetone phosphate to form quinolinate. The protein is Quinolinate synthase of Bacillus pumilus (strain SAFR-032).